The following is a 37-amino-acid chain: Large ribosomal subunit protein bL36 (37 aa).

This sequence belongs to the bacterial ribosomal protein bL36 family.

The sequence is that of Large ribosomal subunit protein bL36 from Borreliella afzelii (strain PKo) (Borrelia afzelii).